Reading from the N-terminus, the 198-residue chain is MSILISPSNNTGWGLRFPSKMFGGAKKRSDQHPVRVRGHYRAPWGAHKRGRTGRTTVDDAIDAVVEEARNYTPTPPPVSTVDAAIQTVVRGARRYAKMKRRRRRVARRHRRRPGTAAQRAAAALLNRARRTGRRAAMRAARRLAAGIVTVPPRSRRRAAAAAAAAISAMTQGRRGNVYWVRDSVSGLRVPVRTRPPRN.

The residue at position 2 (serine 2) is an N-acetylserine; by host. A propeptide spanning residues 2-24 is cleaved from the precursor; it reads SILISPSNNTGWGLRFPSKMFGG. Residues 24–55 are disordered; it reads GAKKRSDQHPVRVRGHYRAPWGAHKRGRTGRT. Lysine 27 and lysine 48 each carry N6-acetyllysine; by host. The span at 34–52 shows a compositional bias: basic residues; that stretch reads VRVRGHYRAPWGAHKRGRT. Residues threonine 55 and threonine 74 each carry the phosphothreonine; by host modification. 2 positions are modified to phosphoserine; by host: serine 183 and serine 185. The short motif at 188 to 198 is the Nuclear localization signal element; sequence RVPVRTRPPRN.

It belongs to the adenoviridae histone-like nucleoprotein family. As to quaternary structure, interacts with the core-capsid bridging protein; this interaction bridges the virus core to the capsid. Interacts with host NPM1; this interaction might play a role in placing the pre-histone-like nucleoprotein on the viral DNA or regulating viral gene expression. Interacts with host HMGB1; this interaction inhibits host immune response. Cleaved near the N-terminus by the viral protease during virion maturation to form the mature protein.

It localises to the virion. Its subcellular location is the host nucleus. The protein localises to the host nucleolus. Its function is as follows. Plays a role in the inhibition of host immune response within the nucleus. Interacts with cellular nucleosomes and immobilizes the host immune danger signal HMGB1 on chromatin. In turn, prevents HMGB1 release out of the cell and thus decreases inflammation. Also plays a role in the wrapping and condensation of the viral DNA. May also promote viral genome import into the nucleus. The chain is Pre-histone-like nucleoprotein from Human adenovirus C serotype 2 (HAdV-2).